The chain runs to 223 residues: Icarapin (223 aa).

The signal sequence occupies residues 1-19 (MKTLGVLFIAAWFIACTHS). Asparagine 126, asparagine 142, asparagine 168, and asparagine 193 each carry an N-linked (GlcNAc...) asparagine glycan. The span at 186–203 (LPTLIGKNETSTQSSRSV) shows a compositional bias: polar residues. Residues 186-223 (LPTLIGKNETSTQSSRSVESVEDFDNEIPKNQGDVLTA) form a disordered region.

As to expression, expressed by the venom duct.

It is found in the secreted. This chain is Icarapin, found in Apis mellifera carnica (Carniolan honeybee).